The sequence spans 131 residues: MARSNQTARKATGGKAPHFAMRVWQHSTPPLKKPYRYKPGTVALREIRKYQKTTDLVIRKLPFQRLVKEIAQSLKADLRFQTGAVSALQEAAEAFMVGMFEDTNLCAMHAKRSTIMPKDIQLAKRLRGDRV.

Residue Lys-10 is modified to N6,N6,N6-trimethyllysine; alternate. At Lys-10 the chain carries N6,N6-dimethyllysine; alternate. An N6-acetyllysine; alternate modification is found at Lys-10. The residue at position 10 (Lys-10) is an N6-methyllysine; alternate. A Phosphothreonine modification is found at Thr-12. An N6-acetyllysine modification is found at Lys-15. A Phosphoserine modification is found at Ser-27. An N6,N6,N6-trimethyllysine; alternate modification is found at Lys-32. Position 32 is an N6,N6-dimethyllysine; alternate (Lys-32). Lys-32 carries the post-translational modification N6-methyllysine; alternate.

It belongs to the histone H3 family. In terms of assembly, the nucleosome is a histone octamer containing two molecules each of H2A, H2B, H3 and H4 assembled in one H3-H4 heterotetramer and two H2A-H2B heterodimers. The octamer wraps approximately 147 bp of DNA. Expressed in roots, seedlings, leaves buds and open flowers.

Its subcellular location is the nucleus. It localises to the chromosome. Core component of nucleosome. Nucleosomes wrap and compact DNA into chromatin, limiting DNA accessibility to the cellular machineries which require DNA as a template. Histones thereby play a central role in transcription regulation, DNA repair, DNA replication and chromosomal stability. DNA accessibility is regulated via a complex set of post-translational modifications of histones, also called histone code, and nucleosome remodeling. The polypeptide is Histone H3-like 4 (Arabidopsis thaliana (Mouse-ear cress)).